A 254-amino-acid polypeptide reads, in one-letter code: Persulfide dioxygenase ETHE1, mitochondrial (254 aa).

The N-terminal 7 residues, 1–7 (MAGSVLK), are a transit peptide targeting the mitochondrion. Phosphoserine is present on residues serine 14 and serine 19. Lysine 32 carries the post-translational modification N6-acetyllysine; alternate. Lysine 32 carries the N6-succinyllysine; alternate modification. N6-acetyllysine is present on lysine 66. 3 residues coordinate Fe cation: histidine 79, histidine 135, and aspartate 154.

The protein belongs to the metallo-beta-lactamase superfamily. Glyoxalase II family. In terms of assembly, homodimer. Monomer. Interacts with TST. May interact with RELA. The cofactor is Fe(2+).

Its subcellular location is the cytoplasm. The protein resides in the nucleus. It is found in the mitochondrion matrix. The catalysed reaction is S-sulfanylglutathione + O2 + H2O = sulfite + glutathione + 2 H(+). With respect to regulation, glutathione increases enzyme activity. Sulfur dioxygenase that plays an essential role in hydrogen sulfide catabolism in the mitochondrial matrix. Hydrogen sulfide (H(2)S) is first oxidized by SQRDL, giving rise to cysteine persulfide residues. ETHE1 consumes molecular oxygen to catalyze the oxidation of the persulfide, once it has been transferred to a thiophilic acceptor, such as glutathione (R-SSH). Plays an important role in metabolic homeostasis in mitochondria by metabolizing hydrogen sulfide and preventing the accumulation of supraphysiological H(2)S levels that have toxic effects, due to the inhibition of cytochrome c oxidase. First described as a protein that can shuttle between the nucleus and the cytoplasm and suppress p53-induced apoptosis by sequestering the transcription factor RELA/NFKB3 in the cytoplasm and preventing its accumulation in the nucleus. The protein is Persulfide dioxygenase ETHE1, mitochondrial (ETHE1) of Bos taurus (Bovine).